A 524-amino-acid polypeptide reads, in one-letter code: Probable myosin-binding protein 5 (524 aa).

Residues 20–40 (FLIYALLEWILIIILFIDGFL) form a helical membrane-spanning segment. The GTD-binding domain maps to 299–397 (SILQHLNRQV…ELEAGIEVYR (99 aa)). Residues 462–490 (SRKDMLVKEISEITERLNAIESKGELLQQ) are a coiled coil.

It localises to the membrane. In terms of biological role, probable membrane-anchored myosin receptors. This is Probable myosin-binding protein 5 from Arabidopsis thaliana (Mouse-ear cress).